The sequence spans 547 residues: 2-succinyl-5-enolpyruvyl-6-hydroxy-3-cyclohexene-1-carboxylate synthase (547 aa).

This sequence belongs to the TPP enzyme family. MenD subfamily. As to quaternary structure, homodimer. Mg(2+) is required as a cofactor. It depends on Mn(2+) as a cofactor. The cofactor is thiamine diphosphate.

The enzyme catalyses isochorismate + 2-oxoglutarate + H(+) = 5-enolpyruvoyl-6-hydroxy-2-succinyl-cyclohex-3-ene-1-carboxylate + CO2. It functions in the pathway quinol/quinone metabolism; 1,4-dihydroxy-2-naphthoate biosynthesis; 1,4-dihydroxy-2-naphthoate from chorismate: step 2/7. It participates in quinol/quinone metabolism; menaquinone biosynthesis. Functionally, catalyzes the thiamine diphosphate-dependent decarboxylation of 2-oxoglutarate and the subsequent addition of the resulting succinic semialdehyde-thiamine pyrophosphate anion to isochorismate to yield 2-succinyl-5-enolpyruvyl-6-hydroxy-3-cyclohexene-1-carboxylate (SEPHCHC). The sequence is that of 2-succinyl-5-enolpyruvyl-6-hydroxy-3-cyclohexene-1-carboxylate synthase from Mycobacterium sp. (strain KMS).